A 573-amino-acid polypeptide reads, in one-letter code: Solute carrier family 41 member 2 (573 aa).

The Extracellular portion of the chain corresponds to 1 to 162 (MTHSKGRPVT…KESSGVMALQ (162 aa)). A phosphoserine mark is found at Ser-137 and Ser-138. A helical membrane pass occupies residues 163 to 183 (ILVPFLLAGFGTVSAGMVLDI). Residues 184–195 (VQHWEVFKNVTE) are Cytoplasmic-facing. A helical membrane pass occupies residues 196-216 (VFILVPALLGLKGNLEMTLAS). Residues 217–245 (RLSTAVNVGKMDSPIEKWNLIIGNLALKQ) lie on the Extracellular side of the membrane. The helical transmembrane segment at 246–266 (VQATVVGFLAAVAAIILGWIP) threads the bilayer. At 267–282 (EGKYYLSHSILLCSSS) the chain is on the cytoplasmic side. Residues 283-303 (VATAFIASLLQGIIMVGVIVG) traverse the membrane as a helical segment. Residues 304–313 (SKKTGINPDN) lie on the Extracellular side of the membrane. A helical membrane pass occupies residues 314–334 (VATPIAASFGDLITLAILAWI). Over 335–347 (SQGLYSCLETYYY) the chain is Cytoplasmic. The helical transmembrane segment at 348–368 (ISPLVCAFFLALTPIWIIIAA) threads the bilayer. The Extracellular segment spans residues 369 to 376 (KHPATRTV). Residues 377–397 (LHSGWEPVITAMVISSIGGLI) traverse the membrane as a helical segment. Residues 398–406 (LDTTVSDPN) lie on the Cytoplasmic side of the membrane. Residues 407–427 (LVGIVVYTPVINGIGGNLVAI) traverse the membrane as a helical segment. Over 428–469 (QASRISTYLHLHSIPGELPEEPKGCSYPFRTFFGSGVNNKSA) the chain is Extracellular. Residues 470–490 (QVLLLFVIPGHLIFLYTIHLM) traverse the membrane as a helical segment. The Cytoplasmic segment spans residues 491 to 498 (KSGHTSLT). Residues 499–519 (VVFVVVYLFAAVLQVFTLLWI) traverse the membrane as a helical segment. At 520–543 (ADWMVHRFWRKGKDPDSFSIPYLT) the chain is on the extracellular side. A helical membrane pass occupies residues 544–564 (ALGDLLGTALLALSFHFLWLI). The Cytoplasmic portion of the chain corresponds to 565 to 573 (GDRDGDVGD).

It belongs to the SLC41A transporter family.

It localises to the cell membrane. The enzyme catalyses Mg(2+)(in) = Mg(2+)(out). It catalyses the reaction Mn(2+)(in) = Mn(2+)(out). It carries out the reaction Co(2+)(in) = Co(2+)(out). The catalysed reaction is Ni(2+)(in) = Ni(2+)(out). The enzyme catalyses Fe(2+)(in) = Fe(2+)(out). Acts as a plasma-membrane magnesium transporter. Can also mediate the transport of other divalent metal cations in an order of Ba(2+) &gt; Ni(2+) &gt; Co(2+) &gt; Fe(2+) &gt; Mn(2+). In Mus musculus (Mouse), this protein is Solute carrier family 41 member 2 (Slc41a2).